The sequence spans 287 residues: Nucleotide-binding protein Hhal_2130 (287 aa).

11 to 18 (GLSGSGKS) is a binding site for ATP. 63–66 (DARN) contacts GTP.

It belongs to the RapZ-like family.

Functionally, displays ATPase and GTPase activities. This chain is Nucleotide-binding protein Hhal_2130, found in Halorhodospira halophila (strain DSM 244 / SL1) (Ectothiorhodospira halophila (strain DSM 244 / SL1)).